The following is a 637-amino-acid chain: Extracellular metalloproteinase MEP (637 aa).

The N-terminal stretch at 1-21 (MRSVDSLLLLGLTGLASQANA) is a signal peptide. A propeptide spanning residues 22 to 246 (HPAKRQPNDS…VVGVVDYVAD (225 aa)) is cleaved from the precursor. Asn288 carries an N-linked (GlcNAc...) asparagine glycan. Position 431 (His431) interacts with Zn(2+). Glu432 is a catalytic residue. His435 is a binding site for Zn(2+).

Belongs to the peptidase M36 family. Requires Zn(2+) as cofactor.

Its subcellular location is the secreted. Functionally, secreted metalloproteinase that probably acts as a virulence factor. Cleaves Z.mays Endochitinase A (CHIA) between residues 'Gly-29' and 'Cys-30'. This chain is Extracellular metalloproteinase MEP (MEP), found in Fusarium vanettenii (strain ATCC MYA-4622 / CBS 123669 / FGSC 9596 / NRRL 45880 / 77-13-4) (Fusarium solani subsp. pisi).